The following is a 435-amino-acid chain: Envelope glycoprotein M (435 aa).

The Intravirion segment spans residues Met-1–Arg-36. A helical transmembrane segment spans residues Ile-37–Ile-57. Over Ala-58 to Thr-111 the chain is Virion surface. The helical transmembrane segment at Tyr-112–Ile-132 threads the bilayer. Residues His-133 to Thr-155 lie on the Intravirion side of the membrane. Residues Thr-156 to Tyr-176 traverse the membrane as a helical segment. Residues Lys-177–Gln-178 lie on the Virion surface side of the membrane. Residues Ile-179 to Tyr-199 traverse the membrane as a helical segment. The Intravirion segment spans residues Phe-200 to Ala-233. A helical membrane pass occupies residues Val-234–Leu-254. Topologically, residues Glu-255 to Gly-265 are virion surface. A helical transmembrane segment spans residues Leu-266–Ser-288. Over Glu-289–His-294 the chain is Intravirion. Residues Tyr-295–Ala-317 traverse the membrane as a helical segment. At His-318–Arg-334 the chain is on the virion surface side. Residues Leu-335–Leu-355 traverse the membrane as a helical segment. Residues Leu-356 to Glu-435 are Intravirion-facing.

The protein belongs to the herpesviridae glycoprotein M family. In terms of assembly, interacts (via N-terminus) with gN (via N-terminus). The gM-gN heterodimer forms the gCII complex.

It is found in the virion membrane. The protein resides in the host Golgi apparatus. The protein localises to the host trans-Golgi network. Its subcellular location is the host endosome membrane. It localises to the host nucleus inner membrane. Functionally, envelope glycoprotein important for virion assembly and egress. Plays a role in the correct incorporation of gH-gL into virion membrane. Directs the glycoprotein N (gN) to the host trans-Golgi network. The polypeptide is Envelope glycoprotein M (Homo sapiens (Human)).